The sequence spans 145 residues: Deoxyuridine 5'-triphosphate nucleotidohydrolase (145 aa).

Substrate-binding positions include 65–67 (RSG), Asn78, and 82–84 (TID).

The protein belongs to the dUTPase family. Mg(2+) serves as cofactor.

The catalysed reaction is dUTP + H2O = dUMP + diphosphate + H(+). The protein operates within pyrimidine metabolism; dUMP biosynthesis; dUMP from dCTP (dUTP route): step 2/2. This enzyme is involved in nucleotide metabolism: it produces dUMP, the immediate precursor of thymidine nucleotides and it decreases the intracellular concentration of dUTP so that uracil cannot be incorporated into DNA. The polypeptide is Deoxyuridine 5'-triphosphate nucleotidohydrolase (Clostridium tetani (strain Massachusetts / E88)).